A 595-amino-acid polypeptide reads, in one-letter code: Aspartate--tRNA(Asp/Asn) ligase (595 aa).

Glu175 contacts L-aspartate. An aspartate region spans residues 199–202 (QQYK). Positions 221 and 454 each coordinate L-aspartate. Position 221–223 (221–223 (RDE)) interacts with ATP. Position 488 (Glu488) interacts with ATP. Arg495 lines the L-aspartate pocket. An ATP-binding site is contributed by 540–543 (GIDR).

This sequence belongs to the class-II aminoacyl-tRNA synthetase family. Type 1 subfamily. As to quaternary structure, homodimer.

The protein localises to the cytoplasm. It carries out the reaction tRNA(Asx) + L-aspartate + ATP = L-aspartyl-tRNA(Asx) + AMP + diphosphate. Aspartyl-tRNA synthetase with relaxed tRNA specificity since it is able to aspartylate not only its cognate tRNA(Asp) but also tRNA(Asn). Reaction proceeds in two steps: L-aspartate is first activated by ATP to form Asp-AMP and then transferred to the acceptor end of tRNA(Asp/Asn). The protein is Aspartate--tRNA(Asp/Asn) ligase of Sinorhizobium medicae (strain WSM419) (Ensifer medicae).